We begin with the raw amino-acid sequence, 677 residues long: Protein hook (677 aa).

The Calponin-homology (CH) domain occupies 6-123 (NEMYYSLLEW…RLLQLVLGCA (118 aa)). Coiled-coil stretches lie at residues 135–436 (EIMC…KCGH) and 478–588 (QTAL…AKEV).

Belongs to the hook family. As to quaternary structure, homodimer. Interacts with microtubules via its N-terminus.

The protein resides in the cytoplasm. The protein localises to the cytoskeleton. Its subcellular location is the endosome. It is found in the synapse. In terms of biological role, involved in endocytic trafficking by stabilizing organelles of the endocytic pathway. Probably acts as a cytoskeletal linker protein required to tether endosome vesicles to the cytoskeleton. Involved in modulation of endocytosis at stages required for down-regulation of membrane proteins that control synapse size. Not involved in synaptic vesicle recycling. Required in R7 cells for boss endocytosis into multivesicular bodies (MVBs). Has a role in regulating adult longevity. This chain is Protein hook, found in Drosophila persimilis (Fruit fly).